The following is a 454-amino-acid chain: Phenylalanine--tRNA ligase, mitochondrial (454 aa).

Residues S141–Q144, R163, V170–Y172, Q177–E179, E266, and F291 each bind substrate. The tract at residues K327 to L347 is disordered. The span at S328 to L347 shows a compositional bias: low complexity. The 94-residue stretch at S361–R454 folds into the FDX-ACB domain.

Belongs to the class-II aminoacyl-tRNA synthetase family. As to quaternary structure, monomer.

The protein localises to the mitochondrion matrix. It catalyses the reaction tRNA(Phe) + L-phenylalanine + ATP = L-phenylalanyl-tRNA(Phe) + AMP + diphosphate + H(+). In terms of biological role, is responsible for the charging of tRNA(Phe) with phenylalanine in mitochondrial translation. This chain is Phenylalanine--tRNA ligase, mitochondrial (mpheS), found in Dictyostelium discoideum (Social amoeba).